A 287-amino-acid chain; its full sequence is uncharacterized protein (287 aa).

A signal peptide spans 1–20; that stretch reads MKVICGSVFLFSLFFQVVLG. Over 22 to 201 the chain is Extracellular; the sequence is YFSSSSGNPN…AFYGPRRNIK (180 aa). 3 N-linked (GlcNAc...) asparagine glycosylation sites follow: Asn-120, Asn-154, and Asn-166. Residues 202 to 222 traverse the membrane as a helical segment; sequence AAIAVPSVILGLILVALVYYA. Residues 223 to 287 lie on the Cytoplasmic side of the membrane; the sequence is YRKDTWKIYM…YYQSQVKKFH (65 aa).

The protein localises to the membrane. This is an uncharacterized protein from Schizosaccharomyces pombe (strain 972 / ATCC 24843) (Fission yeast).